We begin with the raw amino-acid sequence, 581 residues long: Colicin-E2 (581 aa).

5 disordered regions span residues Met-1–Gly-74, Gln-242–Asp-269, Pro-293–Glu-320, Ala-421–Lys-488, and Asp-513–Ile-566. Over residues Ile-20–Asp-35 the composition is skewed to gly residues. A compositionally biased stretch (low complexity) spans Gly-36–Pro-45. A compositionally biased stretch (gly residues) spans Trp-46 to Gly-74. Residues Gln-242–Asn-251 are compositionally biased toward polar residues. 3 stretches are compositionally biased toward basic and acidic residues: residues Val-296 to Glu-320, Gln-429 to Arg-452, and Pro-464 to Lys-475. Polar residues predominate over residues Phe-518–Gln-527. The segment covering Arg-535 to Ile-554 has biased composition (basic and acidic residues). Zn(2+)-binding residues include His-549, His-574, and His-578.

This sequence belongs to the colicin/pyosin nuclease family.

This plasmid-coded bactericidal protein is an endonuclease active on both single- and double-stranded DNA but with undefined specificity. Its function is as follows. Colicins are polypeptide toxins produced by and active against E.coli and closely related bacteria. This chain is Colicin-E2 (col), found in Escherichia coli.